Consider the following 720-residue polypeptide: MRHANGRRGDTTIDIGKPVNFTGGLEFSNLTYTVIKKIKDSDGKWLNQEVDLLHQITGYAPKGCVTAVMGPSGAGKSTFLDGLAGRISSLRGRVSVDGMDMTPSFIKRTSAYIMQDDRLFPMLTVYETLLFAADLRLGPISMTDKRQRVEKLIEQLGLSSARNTYIGDEGTRGVSGGERRRVSIGVDIIHGPSLLFLDEPTSGLDSTSAHSVIDKVHAIARAGSTVILTIHQPSSRIQLLLDHLIILARGQLMYQGSPKDVSLHLGRMGRKVPKGESSIENLIDVIQEYDQSELGVEALAAFALTGMKPPPLGAHEMSIVPPSPAPSHREGRGHDRSNKRLHLKDQDFDHSLRSNWNTSKSWSASHSGVLQTLGFSPARHHRDHRNQNSVSSSLGDYAYTSENFRSIPTPHTQSSECTLNENDFMTPYAAANTNAYQYLGPKFANSFLSETWILMRRNFINIRRTPELFLSRLVVLTVMGIMMATMFMHPKKNLQGITNRLSFFIFTVCLFFFSSNDAVPAFIQERFIFVRETSHNKYRASSYTIAGLITYLPFLAVQAAVYAVIVWFALSLRGPFIYFLIVLYMSLLSTNSFVVFVSSVVPNYILGYAAVIAFTALFFLFCGYFLNSHDMPQYWKWMNYISTMTYPYEGLLMNQFQTSQTFGIDPLGRSITGNGILKSLNISQVESKKWEKVYIMLAWAIVYRILFYIVLRFFSKNQRT.

Topologically, residues 1–467 (MRHANGRRGD…NFINIRRTPE (467 aa)) are cytoplasmic. In terms of domain architecture, ABC transporter spans 25 to 274 (LEFSNLTYTV…LGRMGRKVPK (250 aa)). 70–77 (GPSGAGKS) is a binding site for ATP. The tract at residues 313 to 346 (GAHEMSIVPPSPAPSHREGRGHDRSNKRLHLKDQ) is disordered. The span at 327–346 (SHREGRGHDRSNKRLHLKDQ) shows a compositional bias: basic and acidic residues. Residues 468-488 (LFLSRLVVLTVMGIMMATMFM) form a helical membrane-spanning segment. At 489-502 (HPKKNLQGITNRLS) the chain is on the extracellular side. Residues 503–523 (FFIFTVCLFFFSSNDAVPAFI) traverse the membrane as a helical segment. Residues 524–547 (QERFIFVRETSHNKYRASSYTIAG) are Cytoplasmic-facing. The helical transmembrane segment at 548 to 568 (LITYLPFLAVQAAVYAVIVWF) threads the bilayer. Topologically, residues 569–575 (ALSLRGP) are extracellular. The helical transmembrane segment at 576–596 (FIYFLIVLYMSLLSTNSFVVF) threads the bilayer. The Cytoplasmic segment spans residues 597-604 (VSSVVPNY). The helical transmembrane segment at 605 to 625 (ILGYAAVIAFTALFFLFCGYF) threads the bilayer. Over 626 to 693 (LNSHDMPQYW…QVESKKWEKV (68 aa)) the chain is Extracellular. Residue Asn-681 is glycosylated (N-linked (GlcNAc...) asparagine). The helical transmembrane segment at 694 to 714 (YIMLAWAIVYRILFYIVLRFF) threads the bilayer. At 715–720 (SKNQRT) the chain is on the cytoplasmic side.

It belongs to the ABC transporter superfamily. ABCG family. Stunted arbuscule (STR) subfamily. In terms of assembly, heterodimerizes with STR; the resulting transporter is located in the peri-arbuscular membrane.

The protein resides in the cell membrane. Functionally, together with STR, required for arbuscule development in arbuscular mycorrhizal (AM) symbiosis. The polypeptide is ABC transporter G family member STR2 (Petunia hybrida (Petunia)).